A 458-amino-acid polypeptide reads, in one-letter code: Major capsid protein (458 aa).

The stretch at 21-110 (LEGLTAAQKA…EIKSLLTARE (90 aa)) forms a coiled coil.

Belongs to the HK97 phage major capsid protein family. Interacts with the decoration protein; each hexon binds a single copy of the decoration protein. Interacts with the portal protein. The scaffolding domain delta is cleaved by the prohead protease and lost after assembly. The major capsid protein precursors together with both the portal complex and the maturation protease form prohead I. All copies of the major capsid protein precursor are cleaved to the mature major capsid protein by release of the scaffolding domain delta, yielding the metastable prohead II.

The protein resides in the virion. Functionally, major capsid protein that self-associates to form 120 hexamers and 11 pentamers, building the T=13 icosahedral capsid which about 860 Angstroms in diameter. Responsible for its self-assembly into a procapsid. The phage does not need to encode a separate scaffolfing protein because its capsid protein contains the delta domain that carries that function. The capsid gains its final stability through the reorganization of the subunits that takes place upon expansion. DNA encapsidation through the portal triggers capsid expansion and the binding of the decoration protein to the capsid exterior. Might play a role in counteracting the host Pycsar defense system that is mediated by pyrimidine cyclases and leads to abortive infection. The chain is Major capsid protein from Escherichia coli (Enterobacteria phage T5).